A 305-amino-acid polypeptide reads, in one-letter code: MIKQRTLKRIVQATGVGLHTGKKVTLTLRPAPANTGVIYRRTDLNPPVDFPADAKSVRDTMLCTCLVNEHDVRISTVEHLNAALAGLGIDNIIVEVDAPEIPIMDGSAAPFVYLLLDAGINELNCAKKFVRIKETVRVEDGDKWAEFKPYNGFSLDFTIDFNHPAIDASTQRYTLNFSADAFMRQISRARTFGFMRDIEYLQSRGLCLGGSFDCAIVVDDYRVLNEDGLRFEDEFVRHKMLDAIGDLFMCGHNIIGAFTAYKSGHALNNKLLQAVLAKQEAWEYVTFEDDAKLPMAFRAPSMVLA.

Zn(2+)-binding residues include His79, His238, and Asp242. His265 functions as the Proton donor in the catalytic mechanism.

It belongs to the LpxC family. The cofactor is Zn(2+).

The catalysed reaction is a UDP-3-O-[(3R)-3-hydroxyacyl]-N-acetyl-alpha-D-glucosamine + H2O = a UDP-3-O-[(3R)-3-hydroxyacyl]-alpha-D-glucosamine + acetate. Its pathway is glycolipid biosynthesis; lipid IV(A) biosynthesis; lipid IV(A) from (3R)-3-hydroxytetradecanoyl-[acyl-carrier-protein] and UDP-N-acetyl-alpha-D-glucosamine: step 2/6. Its function is as follows. Catalyzes the hydrolysis of UDP-3-O-myristoyl-N-acetylglucosamine to form UDP-3-O-myristoylglucosamine and acetate, the committed step in lipid A biosynthesis. The polypeptide is UDP-3-O-acyl-N-acetylglucosamine deacetylase (Klebsiella pneumoniae (strain 342)).